A 156-amino-acid polypeptide reads, in one-letter code: Snaclec A2 (156 aa).

Residues 1-23 (MGRLISVSFGLLVVFLSLSGTGA) form the signal peptide. Intrachain disulfides connect cysteine 27/cysteine 38, cysteine 55/cysteine 154, and cysteine 129/cysteine 146. In terms of domain architecture, C-type lectin spans 34–155 (HEGHCYKVFN…CGQPYRFTCE (122 aa)).

Belongs to the snaclec family. In terms of assembly, heterodimer; disulfide-linked. In terms of tissue distribution, expressed by the venom gland.

It is found in the secreted. Interferes with one step of hemostasis (modulation of platelet aggregation, or coagulation cascade, for example). In Macrovipera lebetinus (Levantine viper), this protein is Snaclec A2.